The chain runs to 407 residues: Shaggy-related protein kinase GSK1 (407 aa).

Residues 1-19 (MEAPPGPEPMELDAPPPPA) are compositionally biased toward pro residues. The tract at residues 1–21 (MEAPPGPEPMELDAPPPPAAV) is disordered. The Protein kinase domain maps to 68 to 352 (YMAERVVGTG…ALDACAHSFF (285 aa)). Residues 74–82 (VGTGSFGIV) and Lys97 contribute to the ATP site. The Proton acceptor role is filled by Asp193.

This sequence belongs to the protein kinase superfamily. CMGC Ser/Thr protein kinase family. GSK-3 subfamily. As to quaternary structure, interacts with LIC. As to expression, highly expressed in the entire young panicles, spikelets, awns, vascular bundles of palea and lemma, stigma and rachilla. Expressed in root tips, root hairs, lamina joint in the collar region, vascular bundles of coleoptiles.

The enzyme catalyses L-seryl-[protein] + ATP = O-phospho-L-seryl-[protein] + ADP + H(+). It catalyses the reaction L-threonyl-[protein] + ATP = O-phospho-L-threonyl-[protein] + ADP + H(+). Functionally, probable serine-threonine kinase that may act as a negative regulator of brassinosteroid (BR) signaling during flower development. May have physiological roles in stress signal-transduction pathways. Phosphorylates LIC in response to BR perception. This Oryza sativa subsp. japonica (Rice) protein is Shaggy-related protein kinase GSK1.